A 464-amino-acid polypeptide reads, in one-letter code: UDP-N-acetylmuramoyl-tripeptide--D-alanyl-D-alanine ligase (464 aa).

125–131 (GSNGKTT) provides a ligand contact to ATP.

The protein belongs to the MurCDEF family. MurF subfamily.

The protein resides in the cytoplasm. The catalysed reaction is D-alanyl-D-alanine + UDP-N-acetyl-alpha-D-muramoyl-L-alanyl-gamma-D-glutamyl-meso-2,6-diaminopimelate + ATP = UDP-N-acetyl-alpha-D-muramoyl-L-alanyl-gamma-D-glutamyl-meso-2,6-diaminopimeloyl-D-alanyl-D-alanine + ADP + phosphate + H(+). Its pathway is cell wall biogenesis; peptidoglycan biosynthesis. Its function is as follows. Involved in cell wall formation. Catalyzes the final step in the synthesis of UDP-N-acetylmuramoyl-pentapeptide, the precursor of murein. This is UDP-N-acetylmuramoyl-tripeptide--D-alanyl-D-alanine ligase from Borreliella burgdorferi (strain ATCC 35210 / DSM 4680 / CIP 102532 / B31) (Borrelia burgdorferi).